Here is a 372-residue protein sequence, read N- to C-terminus: 4-hydroxy-3-methylbut-2-en-1-yl diphosphate synthase (flavodoxin) (372 aa).

4 residues coordinate [4Fe-4S] cluster: cysteine 270, cysteine 273, cysteine 305, and glutamate 312.

Belongs to the IspG family. Requires [4Fe-4S] cluster as cofactor.

It catalyses the reaction (2E)-4-hydroxy-3-methylbut-2-enyl diphosphate + oxidized [flavodoxin] + H2O + 2 H(+) = 2-C-methyl-D-erythritol 2,4-cyclic diphosphate + reduced [flavodoxin]. Its pathway is isoprenoid biosynthesis; isopentenyl diphosphate biosynthesis via DXP pathway; isopentenyl diphosphate from 1-deoxy-D-xylulose 5-phosphate: step 5/6. Converts 2C-methyl-D-erythritol 2,4-cyclodiphosphate (ME-2,4cPP) into 1-hydroxy-2-methyl-2-(E)-butenyl 4-diphosphate. This Aliivibrio salmonicida (strain LFI1238) (Vibrio salmonicida (strain LFI1238)) protein is 4-hydroxy-3-methylbut-2-en-1-yl diphosphate synthase (flavodoxin).